The primary structure comprises 394 residues: Elongation factor Tu (394 aa).

Residues 10–204 form the tr-type G domain; sequence KPHVNVGTIG…YLDSYIPEPE (195 aa). Residues 19–26 form a G1 region; sequence GHVDHGKT. 19-26 is a GTP binding site; it reads GHVDHGKT. Threonine 26 lines the Mg(2+) pocket. Residues 60–64 form a G2 region; the sequence is GITIN. The segment at 81–84 is G3; it reads DCPG. GTP is bound by residues 81–85 and 136–139; these read DCPGH and NKCD. A G4 region spans residues 136–139; that stretch reads NKCD. A G5 region spans residues 174 to 176; that stretch reads SAL.

The protein belongs to the TRAFAC class translation factor GTPase superfamily. Classic translation factor GTPase family. EF-Tu/EF-1A subfamily. As to quaternary structure, monomer.

The protein localises to the cytoplasm. It carries out the reaction GTP + H2O = GDP + phosphate + H(+). Functionally, GTP hydrolase that promotes the GTP-dependent binding of aminoacyl-tRNA to the A-site of ribosomes during protein biosynthesis. This Pectobacterium atrosepticum (strain SCRI 1043 / ATCC BAA-672) (Erwinia carotovora subsp. atroseptica) protein is Elongation factor Tu.